We begin with the raw amino-acid sequence, 223 residues long: Dephospho-CoA kinase (223 aa).

One can recognise a DPCK domain in the interval 22-223; sequence LIGLSGPSCS…LLQEVKKRGF (202 aa). 30–35 lines the ATP pocket; the sequence is CSGKNT.

It belongs to the CoaE family.

It localises to the cytoplasm. The enzyme catalyses 3'-dephospho-CoA + ATP = ADP + CoA + H(+). It functions in the pathway cofactor biosynthesis; coenzyme A biosynthesis; CoA from (R)-pantothenate: step 5/5. Catalyzes the phosphorylation of the 3'-hydroxyl group of dephosphocoenzyme A to form coenzyme A. The chain is Dephospho-CoA kinase from Treponema denticola (strain ATCC 35405 / DSM 14222 / CIP 103919 / JCM 8153 / KCTC 15104).